The chain runs to 263 residues: H-2 class II histocompatibility antigen, A-K beta chain (263 aa).

Residues 1 to 27 form the signal peptide; that stretch reads MALQIPSLLLLAAVVVLTVLSSPGTEG. The segment at 28–120 is beta-1; sequence GNSERHFVHQ…TETPTSLRRL (93 aa). At 28 to 224 the chain is on the extracellular side; the sequence is GNSERHFVHQ…RAQSESARSK (197 aa). Cystine bridges form between Cys42/Cys104 and Cys143/Cys199. An N-linked (GlcNAc...) asparagine glycan is attached at Asn46. Residues 121–214 form a beta-2 region; sequence EQPSVVISLS…SLKSPITVEW (94 aa). An Ig-like C1-type domain is found at 123-211; the sequence is PSVVISLSRT…EHPSLKSPIT (89 aa). Positions 215–224 are connecting peptide; sequence RAQSESARSK. A helical membrane pass occupies residues 225 to 245; sequence MLSGIGGCVLGVIFLGLGLFI. At 246-263 the chain is on the cytoplasmic side; that stretch reads RHRSQKGPRGPPPAGLLQ.

This sequence belongs to the MHC class II family. Ubiquitinated in immature dendritic cells leading to down-regulation of MHC class II.

Its subcellular location is the membrane. This Mus musculus (Mouse) protein is H-2 class II histocompatibility antigen, A-K beta chain (H2-Ab1).